The chain runs to 280 residues: Adenosylcobinamide-GDP ribazoletransferase (280 aa).

Transmembrane regions (helical) follow at residues 4–24, 34–54, 58–78, 108–128, 136–156, 197–217, and 254–274; these read YLLAFKSGFGFLSTIPVGITM, IFFYPVVGAVLGLLIGIVAYA, VFPGPVLAALIMGFVYYITGF, TLGTGGVAFGILVLLAFYGSI, IAAFGSNLPFLMFASMFIAEV, LIGFIFGAVVCCLPFGLIGLI, and ITALIVIAVTLKLSLNGYLGG.

This sequence belongs to the CobS family. Requires Mg(2+) as cofactor.

It is found in the cell membrane. It catalyses the reaction alpha-ribazole + adenosylcob(III)inamide-GDP = adenosylcob(III)alamin + GMP + H(+). The enzyme catalyses alpha-ribazole 5'-phosphate + adenosylcob(III)inamide-GDP = adenosylcob(III)alamin 5'-phosphate + GMP + H(+). The protein operates within cofactor biosynthesis; adenosylcobalamin biosynthesis; adenosylcobalamin from cob(II)yrinate a,c-diamide: step 7/7. In terms of biological role, joins adenosylcobinamide-GDP and alpha-ribazole to generate adenosylcobalamin (Ado-cobalamin). Also synthesizes adenosylcobalamin 5'-phosphate from adenosylcobinamide-GDP and alpha-ribazole 5'-phosphate. This chain is Adenosylcobinamide-GDP ribazoletransferase, found in Methanosarcina mazei (strain ATCC BAA-159 / DSM 3647 / Goe1 / Go1 / JCM 11833 / OCM 88) (Methanosarcina frisia).